We begin with the raw amino-acid sequence, 417 residues long: Phosphoglycerate kinase 1 (417 aa).

At S2 the chain carries N-acetylserine. S2 and S4 each carry phosphoserine. N6-succinyllysine is present on K6. K11 carries the N6-acetyllysine modification. (2R)-3-phosphoglycerate contacts are provided by V23, D24, F25, N26, Q38, and R39. Residues 38–43 form a mitochondrial targeting region exposed following cis-trans isomerization by PIN1 and recognized by the TOM complex for mitochondrial translocation of the protein region; the sequence is QRIKAA. An N6-acetyllysine; alternate modification is found at K48. K48 bears the N6-succinyllysine; alternate mark. S62, H63, G65, and R66 together coordinate (2R)-3-phosphoglycerate. N6-acetyllysine is present on K75. Residue Y76 is modified to Phosphotyrosine. 2 positions are modified to N6-acetyllysine: K86 and K91. N6-acetyllysine; alternate is present on K97. K97 is modified (N6-(2-hydroxyisobutyryl)lysine; alternate). L122 and R123 together coordinate (2R)-3-phosphoglycerate. K131 is subject to N6-acetyllysine; alternate. An N6-malonyllysine; alternate modification is found at K131. K146 is subject to N6-acetyllysine. Residues H170 and R171 each coordinate (2R)-3-phosphoglycerate. Residue K191 is modified to N6-succinyllysine. At Y196 the chain carries Phosphotyrosine. The residue at position 199 (K199) is an N6-acetyllysine. S203 bears the Phosphoserine mark. G214 provides a ligand contact to ADP. G214 provides a ligand contact to CDP. AMP contacts are provided by A215 and K216. Residue A215 participates in ATP binding. A215 contributes to the Mg(2+) binding site. K216 carries the post-translational modification N6-(2-hydroxyisobutyryl)lysine. Mg(2+) is bound by residues A218 and D219. CDP is bound at residue D219. K220 lines the AMP pocket. K220 contributes to the ATP binding site. Residue K220 is modified to N6-(2-hydroxyisobutyryl)lysine. Residue G238 coordinates ADP. CDP is bound at residue G238. G239 contributes to the AMP binding site. An ATP-binding site is contributed by G239. N6-acetyllysine is present on residues K267 and K291. G313 is a binding site for AMP. G313 lines the ATP pocket. The residue at position 323 (K323) is an N6-(2-hydroxyisobutyryl)lysine. CDP-binding residues include G338, V340, and F343. Residue F343 participates in ADP binding. E344 provides a ligand contact to AMP. Residue E344 participates in ATP binding. The residue at position 361 (K361) is an N6-acetyllysine. ATP contacts are provided by D375 and T376. Residue D375 coordinates Mg(2+).

Belongs to the phosphoglycerate kinase family. In terms of assembly, monomer. Interacts with kinase MAPK1/ERK2; the interaction is direct, occurs under hypoxic conditions, and promotes its interaction with PIN1. Interacts with peptidyl-prolyl cis-trans isomerase PIN1; the interaction is direct, occurs under hypoxic conditions, and targets the protein to the mitochondrion by promoting interactions with the TOM complex. Interacts with mitochondrial circRNA mcPGK1 (via its 2nd stem-loop); the interaction is direct and targets the protein to the mitochondrion by promoting interactions with the TOM complex. Interacts with pyruvate dehydrogenase kinase PDK1; the interaction is direct, occurs under hypoxic conditions and leads to PDK1-mediated inhibition of pyruvate dehydrogenase complex activity. Requires Mg(2+) as cofactor. In terms of processing, phosphorylated at Ser-203 by MAPK1/ERK2 under hypoxic conditions, which promotes its mitochondrial targeting.

Its subcellular location is the cytoplasm. The protein resides in the cytosol. It localises to the mitochondrion matrix. It carries out the reaction (2R)-3-phosphoglycerate + ATP = (2R)-3-phospho-glyceroyl phosphate + ADP. The enzyme catalyses L-seryl-[protein] + ATP = O-phospho-L-seryl-[protein] + ADP + H(+). Its pathway is carbohydrate degradation; glycolysis; pyruvate from D-glyceraldehyde 3-phosphate: step 2/5. Its function is as follows. Catalyzes one of the two ATP producing reactions in the glycolytic pathway via the reversible conversion of 1,3-diphosphoglycerate to 3-phosphoglycerate. Both L- and D- forms of purine and pyrimidine nucleotides can be used as substrates, but the activity is much lower on pyrimidines. In addition to its role as a glycolytic enzyme, it seems that PGK-1 acts as a polymerase alpha cofactor protein (primer recognition protein). Acts as a protein kinase when localized to the mitochondrion where it phosphorylates pyruvate dehydrogenase kinase PDK1 to inhibit pyruvate dehydrogenase complex activity and suppress the formation of acetyl-coenzyme A from pyruvate, and consequently inhibit oxidative phosphorylation and promote glycolysis. May play a role in sperm motility. The chain is Phosphoglycerate kinase 1 (PGK1) from Cricetulus griseus (Chinese hamster).